Consider the following 153-residue polypeptide: Probable histone H2A.2 (153 aa).

Disordered stretches follow at residues 1–24 and 127–153; these read MDAS…KKSV and KKTE…PKKA. Over residues 127 to 141 the composition is skewed to basic and acidic residues; that stretch reads KKTERSNTVSKEPKS. Positions 142-153 are enriched in basic residues; the sequence is PKPKAGKSPKKA. The SPKK motif signature appears at 149 to 152; it reads SPKK.

It belongs to the histone H2A family. The nucleosome is a histone octamer containing two molecules each of H2A, H2B, H3 and H4 assembled in one H3-H4 heterotetramer and two H2A-H2B heterodimers. The octamer wraps approximately 147 bp of DNA.

The protein localises to the nucleus. It is found in the chromosome. Its function is as follows. Core component of nucleosome. Nucleosomes wrap and compact DNA into chromatin, limiting DNA accessibility to the cellular machineries which require DNA as a template. Histones thereby play a central role in transcription regulation, DNA repair, DNA replication and chromosomal stability. DNA accessibility is regulated via a complex set of post-translational modifications of histones, also called histone code, and nucleosome remodeling. The polypeptide is Probable histone H2A.2 (Medicago truncatula (Barrel medic)).